We begin with the raw amino-acid sequence, 260 residues long: MHEDVWSLIKETNHKTILYSHGMKNRVLLGYLLKLRGKYNFDFEAVTFISDRSPKWVREEIKWIMKANDVKHRFIECGKCKISLENNGHDYHGSCVVWEGIKNFEGGVVASSIGEHIKDKERFLTWCNDYNLFPPFIHLNVSRERLVKEFESLDKNLISSCYHACVFCPILYKLGKSLIKSEIFYKKKILTDNERKEHALNEFYDAMKEQDIGRMINSVKIYYNKYIRELDEPYADYIKSRDVEMFDKLVNKCKEYLGVK.

This is an uncharacterized protein from Methanocaldococcus jannaschii (strain ATCC 43067 / DSM 2661 / JAL-1 / JCM 10045 / NBRC 100440) (Methanococcus jannaschii).